Consider the following 185-residue polypeptide: Large ribosomal subunit protein uL5 (185 aa).

This sequence belongs to the universal ribosomal protein uL5 family. As to quaternary structure, part of the 50S ribosomal subunit; part of the 5S rRNA/L5/L18/L25 subcomplex. Contacts the 5S rRNA and the P site tRNA. Forms a bridge to the 30S subunit in the 70S ribosome.

This is one of the proteins that bind and probably mediate the attachment of the 5S RNA into the large ribosomal subunit, where it forms part of the central protuberance. In the 70S ribosome it contacts protein S13 of the 30S subunit (bridge B1b), connecting the 2 subunits; this bridge is implicated in subunit movement. Contacts the P site tRNA; the 5S rRNA and some of its associated proteins might help stabilize positioning of ribosome-bound tRNAs. The protein is Large ribosomal subunit protein uL5 of Azorhizobium caulinodans (strain ATCC 43989 / DSM 5975 / JCM 20966 / LMG 6465 / NBRC 14845 / NCIMB 13405 / ORS 571).